Reading from the N-terminus, the 126-residue chain is MEKKKYNISVEATLEVIGGKWKCVILCHLTHGKKRTSELKRLMPNITQKMLTQQLRELEADGVINRIVYNQVPPKVEYELSEYGRSLEGILDMLCAWGANHINRVYGDTFSVLEESVLNDKLKQES.

In terms of domain architecture, HTH hxlR-type spans 8–106 (ISVEATLEVI…WGANHINRVY (99 aa)).

This is an uncharacterized protein from Bacillus subtilis (strain 168).